A 231-amino-acid chain; its full sequence is Fibronectin type III domain-containing protein 4 (231 aa).

Positions 1 to 40 (MPLAPPANSVETMASLMPLSPYLSPTVLLLVSCDLGFVRA) are cleaved as a signal peptide. Residues 41-163 (DRPPSPVNVT…GLDGERPLQT (123 aa)) are Extracellular-facing. A Fibronectin type-III domain is found at 43–136 (PPSPVNVTVT…PRVHFRTLKG (94 aa)). 2 N-linked (GlcNAc...) asparagine glycosylation sites follow: N48 and N143. Positions 118–156 (GLRGESPPGPRVHFRTLKGSDRLPSNSSSPGDITVEGLD) are disordered. A helical membrane pass occupies residues 164–184 (GEVVIIVVVLLMWAAVIGLFC). Topologically, residues 185–231 (RQYDIIKDNDSNNNPKEKGKGPEQSPQGRPVGTTRQKKSPSINTIDV) are cytoplasmic. The segment covering 193-205 (NDSNNNPKEKGKG) has biased composition (basic and acidic residues). Residues 193–231 (NDSNNNPKEKGKGPEQSPQGRPVGTTRQKKSPSINTIDV) are disordered.

In terms of tissue distribution, predominantly expressed in the liver and in the brain, including in the cortex, hypothalamus and hippocampus. Also expressed in heart, lung, kidney and testis. In the colon, expressed in the epithelium and in a subset of immune cells in lymphoid aggregates.

The protein resides in the membrane. The protein localises to the secreted. Functionally, has anti-inflammatory properties. In the colon, acts on macrophages to down-regulate inflammation. May suppress osteoclastogenesis and mature osteoclast resorptive function. In white adipose tissue, decreases local inflammation, via interaction with GPR116. Also required for proper systemic glucose tolerance, specifically sensitizing white adipocytes to insulin and promoting glucose uptake. The insulin sensitizing function in adipose tissue is mediated by interaction with ADGRF5/GPR116 and activation of cAMP signaling. This Mus musculus (Mouse) protein is Fibronectin type III domain-containing protein 4 (Fndc4).